A 66-amino-acid polypeptide reads, in one-letter code: Large ribosomal subunit protein uL29 (66 aa).

It belongs to the universal ribosomal protein uL29 family.

The protein is Large ribosomal subunit protein uL29 of Bacillus mycoides (strain KBAB4) (Bacillus weihenstephanensis).